The following is a 288-amino-acid chain: Long chain fatty acid elongase 1 (288 aa).

Transmembrane regions (helical) follow at residues phenylalanine 39 to phenylalanine 59, leucine 73 to valine 93, tryptophan 126 to leucine 146, proline 150 to histidine 170, glycine 180 to leucine 197, isoleucine 217 to threonine 237, and valine 247 to leucine 267.

The protein belongs to the ELO family.

The protein localises to the membrane. The catalysed reaction is (6Z,9Z,12Z)-octadecatrienoyl-CoA + malonyl-CoA + H(+) = (8Z,11Z,14Z)-3-oxoeicosatrienoyl-CoA + CO2 + CoA. It carries out the reaction (6Z,9Z,12Z,15Z)-octadecatetraenoyl-CoA + malonyl-CoA + H(+) = (8Z,11Z,14Z,17Z)-3-oxoicosatetraenoyl-CoA + CO2 + CoA. It catalyses the reaction (9Z)-hexadecenoyl-CoA + malonyl-CoA + H(+) = 3-oxo-(11Z)-octadecenoyl-CoA + CO2 + CoA. The protein operates within lipid metabolism; fatty acid biosynthesis. Functionally, catalyzes the first and rate-limiting reaction of the four reactions that constitute the long-chain fatty acids elongation cycle. Uses malonyl-CoA to add 2 carbons per cycle to the chain of long-chain fatty acids. Condensing enzyme that catalyzes the elongation of monounsaturated (MUFA) and polyunsaturated (PUFA) fatty acids that are involved in multiple biological processes as precursors of membrane lipids and lipid mediators. This Caenorhabditis elegans protein is Long chain fatty acid elongase 1.